Here is a 425-residue protein sequence, read N- to C-terminus: CDP-diacylglycerol--serine O-phosphatidyltransferase 1 (425 aa).

Over residues 1–16 (MEPNGYRKERRKEQHL) the composition is skewed to basic and acidic residues. Residues 1–23 (MEPNGYRKERRKEQHLGRMNGGG) are disordered. A run of 9 helical transmembrane segments spans residues 42 to 62 (TISLLLIGACFLIWASGALDP), 79 to 99 (WAMIAVFLAYSLLQAPSTVLI), 105 to 125 (IWRLVHGMAVIYLVALTFLLF), 197 to 217 (PLLWVLSIGFELLEVTFRHML), 227 to 247 (SIVLDILICNWFGIWAGMYTV), 296 to 316 (FIQVLTLCIIFLTVELNTFFL), 321 to 341 (WIPPRNPVILYRLILWWLIAI), 361 to 381 (GAFCWLSLGICIVELLICIKF), and 390 to 410 (MPLWVVTLWGSVGLGLVAFLL).

Belongs to the CDP-alcohol phosphatidyltransferase class-I family. As to expression, expressed in trichomes, leaf veins and root vasculature.

The protein localises to the endoplasmic reticulum membrane. It is found in the nucleus envelope. It catalyses the reaction a CDP-1,2-diacyl-sn-glycerol + L-serine = a 1,2-diacyl-sn-glycero-3-phospho-L-serine + CMP + H(+). It functions in the pathway phospholipid metabolism; phosphatidylethanolamine biosynthesis; phosphatidylethanolamine from CDP-diacylglycerol: step 1/2. In terms of biological role, catalyzes a base-exchange reaction in which the polar head group of phosphatidylethanolamine (PE) or phosphatidylcholine (PC) is replaced by L-serine. Is essential for phosphatidylserine (PS) biosynthesis and PE seems to be the most plausible substrate. Plays an important role in microspore maturation. The sequence is that of CDP-diacylglycerol--serine O-phosphatidyltransferase 1 (PSS1) from Arabidopsis thaliana (Mouse-ear cress).